The chain runs to 491 residues: Trypanothione reductase (491 aa).

Position 35-51 (35-51 (DLQKHHGPPHYAALGGT)) interacts with FAD. Cysteines 52 and 57 form a disulfide. Histidine 461 (proton acceptor) is an active-site residue.

It belongs to the class-I pyridine nucleotide-disulfide oxidoreductase family. As to quaternary structure, homodimer. It depends on FAD as a cofactor. Post-translationally, the N-terminus is blocked.

Its subcellular location is the cytoplasm. The enzyme catalyses trypanothione + NADP(+) = trypanothione disulfide + NADPH + H(+). In terms of biological role, trypanothione is the parasite analog of glutathione; this enzyme is the equivalent of glutathione reductase. The polypeptide is Trypanothione reductase (TPR) (Crithidia fasciculata).